The following is a 335-amino-acid chain: 2-acylglycerol O-acyltransferase 1 (335 aa).

The next 2 helical transmembrane spans lie at 24–44 (WVFS…SLVL) and 47–67 (LWLI…TPQA). Residues Asn77, Asn125, and Asn180 are each glycosylated (N-linked (GlcNAc...) asparagine).

The protein belongs to the diacylglycerol acyltransferase family.

The protein localises to the endoplasmic reticulum membrane. It carries out the reaction a 2-acylglycerol + an acyl-CoA = a 1,2-diacylglycerol + CoA. The catalysed reaction is a 2-acylglycerol + an acyl-CoA = a 1,2-diacyl-sn-glycerol + CoA. It catalyses the reaction a 2-acylglycerol + an acyl-CoA = a 2,3-diacyl-sn-glycerol + CoA. The enzyme catalyses a 1-acylglycerol + an acyl-CoA = a 1,2-diacylglycerol + CoA. It carries out the reaction a 1-acylglycerol + an acyl-CoA = a 1,3-diacylglycerol + CoA. The catalysed reaction is a 1-acyl-sn-glycerol + an acyl-CoA = a 1,3-diacyl-sn-glycerol + CoA. It catalyses the reaction a 3-acyl-sn-glycerol + an acyl-CoA = a 1,3-diacyl-sn-glycerol + CoA. It functions in the pathway glycerolipid metabolism; triacylglycerol biosynthesis. In terms of biological role, involved in glycerolipid synthesis and lipid metabolism. Catalyzes the formation of diacylglycerol, the precursor of triacylglycerol, by transferring the acyl chain of a fatty acyl-CoA to a monoacylglycerol, mainly at the sn-1 or sn-3 positions. It uses both sn-2-monoacylglycerol (2-acylglycerol) and sn-1-monoacylglycerol (1-acyl-sn-glycerol) equally well as substrates, and uses sn-3-monoacylglycerol (3-acyl-sn-glycerol) with lower efficiency. This Xenopus tropicalis (Western clawed frog) protein is 2-acylglycerol O-acyltransferase 1 (mogat1).